We begin with the raw amino-acid sequence, 93 residues long: Cobalt transport protein CbiN (93 aa).

The next 2 membrane-spanning stretches (helical) occupy residues 5–25 and 63–83; these read LILL…NHGG and LLFT…LGYA.

It belongs to the CbiN family. As to quaternary structure, forms an energy-coupling factor (ECF) transporter complex composed of an ATP-binding protein (A component, CbiO), a transmembrane protein (T component, CbiQ) and 2 possible substrate-capture proteins (S components, CbiM and CbiN) of unknown stoichimetry.

It localises to the cell inner membrane. The protein operates within cofactor biosynthesis; adenosylcobalamin biosynthesis. Part of the energy-coupling factor (ECF) transporter complex CbiMNOQ involved in cobalt import. This is Cobalt transport protein CbiN from Klebsiella pneumoniae subsp. pneumoniae (strain ATCC 700721 / MGH 78578).